Reading from the N-terminus, the 333-residue chain is Probable G-protein coupled receptor 33 (333 aa).

The Extracellular segment spans residues 1–30 (MDLINSTDYLINASTLVRNSTQFLAPASKM). N-linked (GlcNAc...) asparagine glycosylation is found at asparagine 5, asparagine 12, and asparagine 19. A helical transmembrane segment spans residues 31-53 (IIALSLYISSIIGTITNGLYLWV). Residues 54-64 (LRFKMKQTVNT) lie on the Cytoplasmic side of the membrane. A helical membrane pass occupies residues 65–86 (LLFFHLILSYFISTMILPFMAT). Over 87-103 (SQLQDNHWNFGTALCKV) the chain is Extracellular. An intrachain disulfide couples cysteine 101 to cysteine 179. The helical transmembrane segment at 104 to 124 (FNGTLSLGMFTSVFFLSAIGL) threads the bilayer. At 125–143 (DRYLLTLHPVWSQQHRTPR) the chain is on the cytoplasmic side. A helical membrane pass occupies residues 144 to 165 (WASSIVLGVWISAAALSIPYLI). At 166 to 209 (FRQTHHDRKGKVTCQNNYAVSTNWESKEMQALRQWIHVACFISR) the chain is on the extracellular side. A helical transmembrane segment spans residues 210–230 (FLLGFLLPFFIIIFCYERVAS). Residues 231-246 (KVKERSLFKSSKPFKV) lie on the Cytoplasmic side of the membrane. The chain crosses the membrane as a helical span at residues 247–268 (MMTAIISFFVCWMPYHIHQGLL). Topologically, residues 269 to 283 (LTTNQSLLLELTLIL) are extracellular. N-linked (GlcNAc...) asparagine glycosylation occurs at asparagine 272. Residues 284 to 303 (TVLTTSFNTIFSPTLYLFVG) traverse the membrane as a helical segment. Over 304-333 (ENFKKVFKKSILALFESTFSEDSSVERTQT) the chain is Cytoplasmic.

This sequence belongs to the G-protein coupled receptor 1 family.

Its subcellular location is the cell membrane. Functionally, orphan receptor; could be a chemoattractant receptor. The sequence is that of Probable G-protein coupled receptor 33 (GPR33) from Pan troglodytes (Chimpanzee).